A 706-amino-acid polypeptide reads, in one-letter code: Transcription factor 12 (706 aa).

A disordered region spans residues 25–109 (AMFSPPVNSG…TPFMNSNLIG (85 aa)). 2 stretches are compositionally biased toward polar residues: residues 30–48 (PVNS…QFSG) and 56–76 (GTTS…SRGF). 3 positions are modified to phosphoserine: serine 47, serine 67, and serine 79. Residues 81–93 (HYSDHLNDSRLGT) are compositionally biased toward basic and acidic residues. Serine 98 is modified (phosphoserine). A Glycyl lysine isopeptide (Lys-Gly) (interchain with G-Cter in SUMO2) cross-link involves residue lysine 110. Phosphoserine is present on residues serine 116 and serine 124. The tract at residues 119–140 (LYSRDSGLSGCQSSLLRQDLGL) is leucine-zipper. Disordered regions lie at residues 140–222 (LGSP…SMFA) and 249–313 (FGGI…ASHT). The span at 144–163 (AQLSSSGKPGTPYYSFSATS) shows a compositional bias: polar residues. A Glycyl lysine isopeptide (Lys-Gly) (interchain with G-Cter in SUMO2) cross-link involves residue lysine 181. A Nuclear localization signal motif is present at residues 181–188 (KKVRKVPP). Positions 256-269 (STSHMSQSSSYGSL) are enriched in low complexity. Residues 282 to 306 (VSPTDINTSLPPMSSFHRGSTSSSP) are compositionally biased toward polar residues. Residue threonine 313 is modified to Phosphothreonine. At serine 333 the chain carries Phosphoserine. 2 disordered regions span residues 349-392 (PDHT…YENS) and 520-604 (HKTP…ERRM). The segment covering 352-363 (TSSSFPSNPSTP) has biased composition (low complexity). 2 stretches are compositionally biased toward polar residues: residues 364-376 (VGSP…TSQW) and 383-392 (APSSPSYENS). Position 392 is a phosphoserine (serine 392). Basic and acidic residues-rich tracts occupy residues 542-554 (IKTE…ENLH) and 560-575 (DDMK…DIKV). A Glycyl lysine isopeptide (Lys-Gly) (interchain with G-Cter in SUMO2) cross-link involves residue lysine 543. Position 564 is a phosphoserine (serine 564). A Glycyl lysine isopeptide (Lys-Gly) (interchain with G-Cter in SUMO2) cross-link involves residue lysine 574. Threonine 581 is modified (phosphothreonine). Phosphoserine is present on residues serine 582 and serine 583. Residues 592–604 (PEQKIEREKERRM) show a composition bias toward basic and acidic residues. One can recognise a bHLH domain in the interval 601–654 (ERRMANNARERLRVRDINEAFKELGRMCQLHLKSEKPQTKLLILHQAVAVILSL). Residues lysine 633 and lysine 677 each participate in a glycyl lysine isopeptide (Lys-Gly) (interchain with G-Cter in SUMO2) cross-link. The class A specific domain stretch occupies residues 656–679 (QQVRERNLNPKAACLKRREEEKVS). The segment at 674 to 706 (EEEKVSAASAEPPNTLPGAHPGLSESTNPMGHL) is disordered. The segment covering 697 to 706 (SESTNPMGHL) has biased composition (polar residues).

In terms of assembly, efficient DNA binding requires dimerization with another bHLH protein. Forms homo- or heterooligomers with myogenin, E12 and ITF2 proteins and RUNX1T1. Interacts with PTF1A. Interacts with NEUROD2. Interacts with BHLHA9. In terms of tissue distribution, widely expressed.

It localises to the nucleus. Functionally, transcriptional regulator. Involved in the initiation of neuronal differentiation. Activates transcription by binding to the E box (5'-CANNTG-3'). May be involved in the functional network that regulates the development of the GnRH axis. The protein is Transcription factor 12 (Tcf12) of Mus musculus (Mouse).